The following is a 210-amino-acid chain: Ribosomal RNA large subunit methyltransferase E (210 aa).

S-adenosyl-L-methionine is bound by residues G60, W62, D80, D96, and D121. The Proton acceptor role is filled by K161.

Belongs to the class I-like SAM-binding methyltransferase superfamily. RNA methyltransferase RlmE family.

Its subcellular location is the cytoplasm. It catalyses the reaction uridine(2552) in 23S rRNA + S-adenosyl-L-methionine = 2'-O-methyluridine(2552) in 23S rRNA + S-adenosyl-L-homocysteine + H(+). Specifically methylates the uridine in position 2552 of 23S rRNA at the 2'-O position of the ribose in the fully assembled 50S ribosomal subunit. The chain is Ribosomal RNA large subunit methyltransferase E from Vesicomyosocius okutanii subsp. Calyptogena okutanii (strain HA).